Here is a 200-residue protein sequence, read N- to C-terminus: Pyridoxine/pyridoxamine 5'-phosphate oxidase (200 aa).

Residues 48-53 (RMVLLK), 63-64 (YT), Lys70, and Gln92 contribute to the FMN site. Lys53 serves as a coordination point for substrate. Positions 110, 114, and 118 each coordinate substrate. Residues 127–128 (QS) and Trp171 contribute to the FMN site. 177–179 (RLH) lines the substrate pocket. Arg181 contacts FMN.

The protein belongs to the pyridoxamine 5'-phosphate oxidase family. As to quaternary structure, homodimer. FMN is required as a cofactor.

It carries out the reaction pyridoxamine 5'-phosphate + O2 + H2O = pyridoxal 5'-phosphate + H2O2 + NH4(+). The catalysed reaction is pyridoxine 5'-phosphate + O2 = pyridoxal 5'-phosphate + H2O2. It functions in the pathway cofactor metabolism; pyridoxal 5'-phosphate salvage; pyridoxal 5'-phosphate from pyridoxamine 5'-phosphate: step 1/1. Its pathway is cofactor metabolism; pyridoxal 5'-phosphate salvage; pyridoxal 5'-phosphate from pyridoxine 5'-phosphate: step 1/1. Functionally, catalyzes the oxidation of either pyridoxine 5'-phosphate (PNP) or pyridoxamine 5'-phosphate (PMP) into pyridoxal 5'-phosphate (PLP). The chain is Pyridoxine/pyridoxamine 5'-phosphate oxidase from Cereibacter sphaeroides (strain ATCC 17023 / DSM 158 / JCM 6121 / CCUG 31486 / LMG 2827 / NBRC 12203 / NCIMB 8253 / ATH 2.4.1.) (Rhodobacter sphaeroides).